An 83-amino-acid chain; its full sequence is Large ribosomal subunit protein bL31B (83 aa).

Belongs to the bacterial ribosomal protein bL31 family. Type B subfamily. As to quaternary structure, part of the 50S ribosomal subunit.

Its function is as follows. Binds the 23S rRNA. This chain is Large ribosomal subunit protein bL31B, found in Lactobacillus delbrueckii subsp. bulgaricus (strain ATCC 11842 / DSM 20081 / BCRC 10696 / JCM 1002 / NBRC 13953 / NCIMB 11778 / NCTC 12712 / WDCM 00102 / Lb 14).